Reading from the N-terminus, the 79-residue chain is MDIKSEVLKIIDELFMEDVSDMMDEDLFDAGVLDSMGTVELIVELENHFDITVPVSEFGRDDWNTANKIIEGITELRNA.

The Carrier domain occupies 1–77 (MDIKSEVLKI…KIIEGITELR (77 aa)). S35 bears the O-(pantetheine 4'-phosphoryl)serine mark.

This sequence belongs to the DltC family. Post-translationally, 4'-phosphopantetheine is transferred from CoA to a specific serine of apo-DCP.

The protein localises to the cytoplasm. Its pathway is cell wall biogenesis; lipoteichoic acid biosynthesis. In terms of biological role, carrier protein involved in the D-alanylation of lipoteichoic acid (LTA). The loading of thioester-linked D-alanine onto DltC is catalyzed by D-alanine--D-alanyl carrier protein ligase DltA. The DltC-carried D-alanyl group is further transferred to cell membrane phosphatidylglycerol (PG) by forming an ester bond, probably catalyzed by DltD. D-alanylation of LTA plays an important role in modulating the properties of the cell wall in Gram-positive bacteria, influencing the net charge of the cell wall. The protein is D-alanyl carrier protein of Streptococcus mutans serotype c (strain ATCC 700610 / UA159).